The primary structure comprises 28 residues: Omega-gliadin (28 aa).

The interval 1-28 is disordered; that stretch reads ARQLNPSDQELQSPQQLYPQQPYPQQPY. Low complexity predominate over residues 9 to 20; sequence QELQSPQQLYPQ.

This Triticum monococcum (Einkorn wheat) protein is Omega-gliadin.